The chain runs to 272 residues: MNRIDKTLEKLKANRKKMLSPYITAGDPYPELTVSLMHQLVKSGADVLELGIPFSDPMAEGPVIQRAMERALAHSIHCDDVLNMVRQFRKTDNETPVILMGYLNPIEQYGYDLFAQQAVEAGVDGTILVDLPPEEADGVSRVWQKHGLYSIYLCSPTTSAERMNFINQHANGYLYYVSLKGVTGSDALKLPELKAQYLQRKAQSKLPLMVGFGIKTPEMAAQVAEFADGVIVGATLINEIIEAYEAKKDPLQASGALLSSMRQAIDNIGSMV.

Residues E49 and E60 each act as proton acceptor in the active site.

Belongs to the TrpA family. In terms of assembly, tetramer of two alpha and two beta chains.

The enzyme catalyses (1S,2R)-1-C-(indol-3-yl)glycerol 3-phosphate + L-serine = D-glyceraldehyde 3-phosphate + L-tryptophan + H2O. The protein operates within amino-acid biosynthesis; L-tryptophan biosynthesis; L-tryptophan from chorismate: step 5/5. Its function is as follows. The alpha subunit is responsible for the aldol cleavage of indoleglycerol phosphate to indole and glyceraldehyde 3-phosphate. The polypeptide is Tryptophan synthase alpha chain (Legionella pneumophila (strain Corby)).